A 330-amino-acid polypeptide reads, in one-letter code: Trans-1,2-dihydrobenzene-1,2-diol dehydrogenase (330 aa).

It belongs to the Gfo/Idh/MocA family. As to quaternary structure, homodimer.

It catalyses the reaction (1R,2R)-1,2-dihydrobenzene-1,2-diol + NADP(+) = catechol + NADPH + H(+). The catalysed reaction is D-xylose + NADP(+) = D-xylono-1,5-lactone + NADPH + H(+). This chain is Trans-1,2-dihydrobenzene-1,2-diol dehydrogenase (dhdh), found in Xenopus tropicalis (Western clawed frog).